Reading from the N-terminus, the 76-residue chain is MVNRRRKKMKKKVCTFCADKSSKIDYKEVHKLKKYVTERGKILPRRISGNCAIHQRDITQAIKRSRHIALLPYTID.

This sequence belongs to the bacterial ribosomal protein bS18 family. Part of the 30S ribosomal subunit. Forms a tight heterodimer with protein bS6.

In terms of biological role, binds as a heterodimer with protein bS6 to the central domain of the 16S rRNA, where it helps stabilize the platform of the 30S subunit. The polypeptide is Small ribosomal subunit protein bS18 (Alkaliphilus metalliredigens (strain QYMF)).